A 1372-amino-acid polypeptide reads, in one-letter code: Polysaccharide lyase 8 family protein HylA (1372 aa).

Residues 1–25 (MIKKIIVVVAFMLTGFSLTAMSASA) form the signal peptide. The F5/8 type C domain occupies 63–172 (DGDETTRWSA…SIISFEAYEK (110 aa)). Positions 183-242 (TENLTISEKRKQQLAFEVSPAGVDITEDQIEWSSSDPTIVTVDQTGNLTAVKSGEAKVTV) constitute a BIG2 domain. Active-site residues include histidine 487, tyrosine 496, and arginine 550. FIVAR domains lie at 1014–1075 (KEAL…VKQL), 1084–1146 (DKTN…VKQL), 1155–1217 (DKTN…VKQL), and 1226–1288 (DKTN…VKRL). A disordered region spans residues 1288–1336 (LTLKNSGENKKEQKNGGNNGHLNTSTGVDQTGTKQVKPSSQGGFRKASQ). The segment covering 1308 to 1329 (HLNTSTGVDQTGTKQVKPSSQG) has biased composition (polar residues). The LPXTG sorting signal signature appears at 1338 to 1342 (LPSTG). At threonine 1341 the chain carries Pentaglycyl murein peptidoglycan amidated threonine. A propeptide spans 1342-1372 (GEKKSIALVIIGLLVIASGCLLVFRKSKSKK) (removed by sortase).

The protein belongs to the polysaccharide lyase 8 family.

It localises to the secreted. Its subcellular location is the cell wall. In terms of biological role, has a very modest degradation activity against heparin sodium salt (HS) in vitro. Involved in the pathogenesis of vancomycin-resistant E.faecalis infections. This Enterococcus faecalis (strain ATCC 700802 / V583) protein is Polysaccharide lyase 8 family protein HylA.